The following is a 452-amino-acid chain: Protein phosphatase 1F (452 aa).

Residues 153–410 (LVSIHAIRNT…DNITVMVVFL (258 aa)) enclose the PPM-type phosphatase domain. Mn(2+) is bound by residues aspartate 195, glycine 196, aspartate 357, and aspartate 401. Serine 452 is subject to Phosphoserine.

This sequence belongs to the PP2C family. Associates with FEM1B. Requires Mg(2+) as cofactor. Mn(2+) serves as cofactor. Expressed in the liver.

It carries out the reaction O-phospho-L-seryl-[protein] + H2O = L-seryl-[protein] + phosphate. It catalyses the reaction O-phospho-L-threonyl-[protein] + H2O = L-threonyl-[protein] + phosphate. Dephosphorylates and concomitantly deactivates CaM-kinase II activated upon autophosphorylation, and CaM-kinases IV and I activated upon phosphorylation by CaM-kinase kinase. Promotes apoptosis. This is Protein phosphatase 1F (Ppm1f) from Mus musculus (Mouse).